The primary structure comprises 301 residues: Glutamyl-Q tRNA(Asp) synthetase (301 aa).

Residues 8–12 and glutamate 44 each bind L-glutamate; that span reads RFAPS. Residues 11 to 21 carry the 'HIGH' region motif; sequence PSPTGPLHFGS. 4 residues coordinate Zn(2+): cysteine 100, cysteine 102, tyrosine 122, and cysteine 126. Residues tyrosine 180 and arginine 198 each coordinate L-glutamate. The 'KMSKS' region motif lies at 236–240; that stretch reads KLSKQ. Lysine 239 serves as a coordination point for ATP.

This sequence belongs to the class-I aminoacyl-tRNA synthetase family. GluQ subfamily. Requires Zn(2+) as cofactor.

Functionally, catalyzes the tRNA-independent activation of glutamate in presence of ATP and the subsequent transfer of glutamate onto a tRNA(Asp). Glutamate is transferred on the 2-amino-5-(4,5-dihydroxy-2-cyclopenten-1-yl) moiety of the queuosine in the wobble position of the QUC anticodon. The sequence is that of Glutamyl-Q tRNA(Asp) synthetase from Dechloromonas aromatica (strain RCB).